Consider the following 413-residue polypeptide: uncharacterized protein (413 aa).

The region spanning 3–155 (MEPRVLRREE…SRVRLSVPAG (153 aa)) is the N-acetyltransferase domain. Residues 86 to 88 (VSV), 94 to 99 (RRGVLT), and 122 to 123 (SE) each bind acetyl-CoA. The active-site Proton donor is Tyr-127. The active-site Proton acceptor; via carboxylate is the Phe-413.

Belongs to the acetyltransferase Eis family. Homohexamer; trimer of dimers.

This is an uncharacterized protein from Streptomyces coelicolor (strain ATCC BAA-471 / A3(2) / M145).